We begin with the raw amino-acid sequence, 252 residues long: Triosephosphate isomerase (252 aa).

9–11 serves as a coordination point for substrate; that stretch reads NWK. H100 (electrophile) is an active-site residue. The active-site Proton acceptor is E171. Residues G177, S216, and 237-238 contribute to the substrate site; that span reads GG.

It belongs to the triosephosphate isomerase family. Homodimer.

It is found in the cytoplasm. The enzyme catalyses D-glyceraldehyde 3-phosphate = dihydroxyacetone phosphate. The protein operates within carbohydrate biosynthesis; gluconeogenesis. Its pathway is carbohydrate degradation; glycolysis; D-glyceraldehyde 3-phosphate from glycerone phosphate: step 1/1. In terms of biological role, involved in the gluconeogenesis. Catalyzes stereospecifically the conversion of dihydroxyacetone phosphate (DHAP) to D-glyceraldehyde-3-phosphate (G3P). This is Triosephosphate isomerase from Polynucleobacter asymbioticus (strain DSM 18221 / CIP 109841 / QLW-P1DMWA-1) (Polynucleobacter necessarius subsp. asymbioticus).